Here is a 516-residue protein sequence, read N- to C-terminus: Exodeoxyribonuclease 7 large subunit (516 aa).

This sequence belongs to the XseA family. In terms of assembly, heterooligomer composed of large and small subunits.

The protein localises to the cytoplasm. The enzyme catalyses Exonucleolytic cleavage in either 5'- to 3'- or 3'- to 5'-direction to yield nucleoside 5'-phosphates.. In terms of biological role, bidirectionally degrades single-stranded DNA into large acid-insoluble oligonucleotides, which are then degraded further into small acid-soluble oligonucleotides. This is Exodeoxyribonuclease 7 large subunit from Chlamydia trachomatis serovar L2 (strain ATCC VR-902B / DSM 19102 / 434/Bu).